We begin with the raw amino-acid sequence, 89 residues long: Large ribosomal subunit protein bL27 (89 aa).

The disordered stretch occupies residues 1-26 (MAHKKAGGSSRNGRDSAGQRRGVKRF).

This sequence belongs to the bacterial ribosomal protein bL27 family.

This chain is Large ribosomal subunit protein bL27, found in Nitratidesulfovibrio vulgaris (strain DSM 19637 / Miyazaki F) (Desulfovibrio vulgaris).